A 944-amino-acid chain; its full sequence is Isoleucine--tRNA ligase (944 aa).

The short motif at P58–H68 is the 'HIGH' region element. Residue E563 coordinates L-isoleucyl-5'-AMP. Residues K604 to S608 carry the 'KMSKS' region motif. An ATP-binding site is contributed by K607. Zn(2+)-binding residues include C907, C910, C927, and C930.

Belongs to the class-I aminoacyl-tRNA synthetase family. IleS type 1 subfamily. In terms of assembly, monomer. The cofactor is Zn(2+).

It is found in the cytoplasm. It catalyses the reaction tRNA(Ile) + L-isoleucine + ATP = L-isoleucyl-tRNA(Ile) + AMP + diphosphate. Its function is as follows. Catalyzes the attachment of isoleucine to tRNA(Ile). As IleRS can inadvertently accommodate and process structurally similar amino acids such as valine, to avoid such errors it has two additional distinct tRNA(Ile)-dependent editing activities. One activity is designated as 'pretransfer' editing and involves the hydrolysis of activated Val-AMP. The other activity is designated 'posttransfer' editing and involves deacylation of mischarged Val-tRNA(Ile). This chain is Isoleucine--tRNA ligase, found in Salmonella paratyphi A (strain ATCC 9150 / SARB42).